Reading from the N-terminus, the 241-residue chain is PRA1 family protein H (241 aa).

3 helical membrane passes run 142–162, 189–205, and 209–228; these read LFIV…VGLL, LSIG…LTFL, and MALF…HAGF.

It belongs to the PRA1 family.

The protein localises to the endoplasmic reticulum membrane. Functionally, may be involved in both secretory and endocytic intracellular trafficking in the endosomal/prevacuolar compartments. This Arabidopsis thaliana (Mouse-ear cress) protein is PRA1 family protein H (PRA1H).